The following is a 49-amino-acid chain: MERSHVKRLPQLGHNIFAWKINIDEVSLLLKFCRSCNIFWSCSNSFFDM.

This is an uncharacterized protein from Bacillus subtilis (Bacteriophage phi-105).